A 207-amino-acid polypeptide reads, in one-letter code: Small ribosomal subunit protein uS4 (207 aa).

The tract at residues 31-55 (KCKLDSKPGQHGRTSGARTSDYGTQ) is disordered. A compositionally biased stretch (polar residues) spans 42–53 (GRTSGARTSDYG). In terms of domain architecture, S4 RNA-binding spans 97–160 (SRLDNVVYRM…KKQARIIEAL (64 aa)).

The protein belongs to the universal ribosomal protein uS4 family. In terms of assembly, part of the 30S ribosomal subunit. Contacts protein S5. The interaction surface between S4 and S5 is involved in control of translational fidelity.

Functionally, one of the primary rRNA binding proteins, it binds directly to 16S rRNA where it nucleates assembly of the body of the 30S subunit. Its function is as follows. With S5 and S12 plays an important role in translational accuracy. In Burkholderia vietnamiensis (strain G4 / LMG 22486) (Burkholderia cepacia (strain R1808)), this protein is Small ribosomal subunit protein uS4.